Consider the following 392-residue polypeptide: Spermatogenesis associated 6-like protein (392 aa).

2 positions are modified to phosphoserine: S260 and S263. Low complexity predominate over residues S286–Q301. The segment at S286–D305 is disordered.

The protein belongs to the SPATA6 family.

The polypeptide is Spermatogenesis associated 6-like protein (SPATA6L) (Homo sapiens (Human)).